We begin with the raw amino-acid sequence, 741 residues long: Transcription activator of gluconeogenesis BDBG_05438 (741 aa).

A disordered region spans residues 1 to 70 (MTASTRNGSP…NAKDPLRPRR (70 aa)). The span at 25-61 (KSMTTTPANPPETKSQTNGKGSGTAQSSQKPASTSAN) shows a compositional bias: polar residues. Positions 77 to 105 (CFACQRAHLTCGDERPCQRCIKRGLQDAC) form a DNA-binding region, zn(2)-C6 fungal-type. 6 disordered regions span residues 135-163 (QANT…QSVS), 202-239 (SVFH…SVSG), 285-321 (GAGD…NNQS), 401-421 (TNLM…PGLK), 559-590 (GSSL…PHTG), and 655-741 (FHGK…AKRG). A compositionally biased stretch (polar residues) spans 202 to 226 (SVFHAQSPSSTQNFDLSSNPQTQNL). The span at 227-238 (SSAMSQTASSVS) shows a compositional bias: low complexity. Composition is skewed to polar residues over residues 291 to 321 (PSDS…NNQS) and 401 to 416 (TNLM…SRIS). Low complexity predominate over residues 560-572 (SSLSSASSVRGSS). Residues 573–586 (TFTPRNNNTHNSID) show a composition bias toward polar residues. Over residues 672–718 (TGTTTSGDVATTTATGTSTSNGANANTNGNNTNPNDPSTAASSSASS) the composition is skewed to low complexity. Basic residues predominate over residues 723–732 (RSNHLGKRGG).

Belongs to the ERT1/acuK family.

It localises to the nucleus. Functionally, transcription factor which regulates nonfermentable carbon utilization. Activator of gluconeogenetic genes. The chain is Transcription activator of gluconeogenesis BDBG_05438 from Blastomyces gilchristii (strain SLH14081) (Blastomyces dermatitidis).